A 922-amino-acid polypeptide reads, in one-letter code: DNA gyrase subunit A (922 aa).

A compositionally biased stretch (low complexity) spans 1-14 (MTETPTDGGSTPPS). Residues 1–24 (MTETPTDGGSTPPSDGGGPGGRIE) are disordered. The Topo IIA-type catalytic domain occupies 49–518 (LPDVRDGLKP…ADGDLSMEDL (470 aa)). The active-site O-(5'-phospho-DNA)-tyrosine intermediate is Y137. Residues 545–551 (QRRGGKG) carry the GyrA-box motif. The interval 861–922 (EANGDDELDE…TEPDPGESDG (62 aa)) is disordered. Composition is skewed to acidic residues over residues 863–890 (NGDDELDELDESALDEGGAEGGEVDESA) and 912–922 (DTEPDPGESDG).

Belongs to the type II topoisomerase GyrA/ParC subunit family. As to quaternary structure, heterotetramer, composed of two GyrA and two GyrB chains. In the heterotetramer, GyrA contains the active site tyrosine that forms a transient covalent intermediate with DNA, while GyrB binds cofactors and catalyzes ATP hydrolysis.

The protein localises to the cytoplasm. It catalyses the reaction ATP-dependent breakage, passage and rejoining of double-stranded DNA.. In terms of biological role, a type II topoisomerase that negatively supercoils closed circular double-stranded (ds) DNA in an ATP-dependent manner to modulate DNA topology and maintain chromosomes in an underwound state. Negative supercoiling favors strand separation, and DNA replication, transcription, recombination and repair, all of which involve strand separation. Also able to catalyze the interconversion of other topological isomers of dsDNA rings, including catenanes and knotted rings. Type II topoisomerases break and join 2 DNA strands simultaneously in an ATP-dependent manner. This is DNA gyrase subunit A from Nocardioides sp. (strain ATCC BAA-499 / JS614).